The chain runs to 1029 residues: U2 snRNP-associated SURP motif-containing protein (1029 aa).

2 disordered regions span residues 1-110 and 141-273; these read MADK…KEDE and VNAA…DPST. The residue at position 2 (Ala2) is an N-acetylalanine. Over residues 7 to 16 the composition is skewed to polar residues; the sequence is GGSQKASSKN. The segment covering 45–54 has biased composition (basic residues); it reads TRPKSPRKHN. Residues 55–64 show a composition bias toward basic and acidic residues; it reads YRNESSRESL. The residue at position 67 (Ser67) is a Phosphoserine. Lys80 is covalently cross-linked (Glycyl lysine isopeptide (Lys-Gly) (interchain with G-Cter in SUMO2)). Positions 92 to 121 form a coiled coil; it reads AKRTLSKKEQEELKKKEDEKAAAEIYEEFL. Basic and acidic residues-rich tracts occupy residues 97-110 and 144-155; these read SKKEQEELKKKEDE and AKDEHETDEKRG. Residues Lys145 and Lys168 each participate in a glycyl lysine isopeptide (Lys-Gly) (interchain with G-Cter in SUMO2) cross-link. The span at 169 to 178 shows a compositional bias: polar residues; the sequence is NPPNQSSNER. Positions 186–222 are enriched in basic and acidic residues; it reads ETKKPPLKKGEKEKKKSNLELFKEELKQIQEERDERH. Positions 192–232 form a coiled coil; it reads LKKGEKEKKKSNLELFKEELKQIQEERDERHKTKGRLSRFE. Position 202 is a phosphoserine (Ser202). A Glycyl lysine isopeptide (Lys-Gly) (interchain with G-Cter in SUMO2) cross-link involves residue Lys208. Ser236 carries the phosphoserine modification. Positions 239 to 249 are enriched in basic and acidic residues; the sequence is DGQRRSMDVPS. Residues 274 to 355 enclose the RRM domain; that stretch reads TNLYLGNINP…FEMKLGWGKA (82 aa). One copy of the SURP motif repeat lies at 430 to 473; it reads LIHRMIEFVVREGPMFEAMIMNREINNPMFRFLFENQTPAHVYY. Ser485 is subject to Phosphoserine. The CID domain maps to 534–679; it reads LKEEQRDKLE…KLQNIFLGLV (146 aa). The segment at 704-729 is disordered; sequence DGAPLEDVDGIPIDATPIDDLDGVPI. Thr719 is modified (phosphothreonine). Glycyl lysine isopeptide (Lys-Gly) (interchain with G-Cter in SUMO2) cross-links involve residues Lys748 and Lys749. Position 760 is an N6-acetyllysine; alternate (Lys760). A Glycyl lysine isopeptide (Lys-Gly) (interchain with G-Cter in SUMO2); alternate cross-link involves residue Lys760. 2 disordered regions span residues 778–841 and 855–1029; these read KWEL…EEKR and QDEL…KNKH. The segment covering 786–806 has biased composition (acidic residues); the sequence is EESEEEENQNQEEESEDEEDT. Residues Ser788, Ser800, and Ser811 each carry the phosphoserine modification. Composition is skewed to basic and acidic residues over residues 810–841 and 874–922; these read KSEEHHLYSNPVREEATESKFSKYSEMSEEKR and QVEH…TPTR. Glycyl lysine isopeptide (Lys-Gly) (interchain with G-Cter in SUMO2) cross-links involve residues Lys829 and Lys832. A coiled-coil region spans residues 837-915; the sequence is SEEKRAKLRE…ESRSKDKKEK (79 aa). At Thr931 the chain carries Phosphothreonine. 2 positions are modified to phosphoserine: Ser946 and Ser948. Basic and acidic residues predominate over residues 950–980; sequence KSERSERSERSHKESSRSRSSHKDSPRDASK. Basic residues predominate over residues 991–1029; the sequence is TPKRSRRSRSRSPKKSGKKSRSQSRSPHRSHKKSKKNKH.

Belongs to the splicing factor SR family. As to quaternary structure, interacts with ERBB4.

It is found in the nucleus. The sequence is that of U2 snRNP-associated SURP motif-containing protein (U2surp) from Mus musculus (Mouse).